A 161-amino-acid polypeptide reads, in one-letter code: Ribonuclease H (161 aa).

The region spanning methionine 1–glutamine 142 is the RNase H type-1 domain. The Mg(2+) site is built by aspartate 10, glutamate 48, aspartate 70, and aspartate 134.

This sequence belongs to the RNase H family. As to quaternary structure, monomer. Mg(2+) is required as a cofactor.

The protein localises to the cytoplasm. It carries out the reaction Endonucleolytic cleavage to 5'-phosphomonoester.. Functionally, endonuclease that specifically degrades the RNA of RNA-DNA hybrids. The sequence is that of Ribonuclease H (rnhA) from Buchnera aphidicola subsp. Schizaphis graminum (strain Sg).